Here is a 937-residue protein sequence, read N- to C-terminus: Protein translocase subunit SecA (937 aa).

Residues Q90, 108-112 (GEGKT), and D509 each bind ATP.

Belongs to the SecA family. As to quaternary structure, monomer and homodimer. Part of the essential Sec protein translocation apparatus which comprises SecA, SecYEG and auxiliary proteins SecDF. Other proteins may also be involved.

The protein localises to the cell inner membrane. It localises to the cellular thylakoid membrane. Its subcellular location is the cytoplasm. It carries out the reaction ATP + H2O + cellular proteinSide 1 = ADP + phosphate + cellular proteinSide 2.. In terms of biological role, part of the Sec protein translocase complex. Interacts with the SecYEG preprotein conducting channel. Has a central role in coupling the hydrolysis of ATP to the transfer of proteins into and across the cell membrane, serving as an ATP-driven molecular motor driving the stepwise translocation of polypeptide chains across the membrane. Probably participates in protein translocation into and across both the cytoplasmic and thylakoid membranes in cyanobacterial cells. This is Protein translocase subunit SecA from Synechococcus sp. (strain CC9902).